Reading from the N-terminus, the 377-residue chain is Dehydrogenase/reductase SDR family member 13 (377 aa).

The N-terminal stretch at 1–25 (MEALLLGAGLLLGAYVLVYYNLVKA) is a signal peptide. NAD(+)-binding residues include Ser-46 and Ile-48. Residue Ser-170 participates in substrate binding. Residues Tyr-197, Lys-201, and Ser-232 each coordinate NAD(+). The active-site Proton acceptor is Tyr-197. The disordered stretch occupies residues 309 to 377 (RLAGLGPGED…AKVEPEIQLS (69 aa)). Positions 317–331 (EDAEPDEDPQSEDSE) are enriched in acidic residues. Over residues 347 to 357 (SQPYPSPQSSP) the composition is skewed to low complexity. Basic and acidic residues predominate over residues 368-377 (AKVEPEIQLS).

The protein belongs to the short-chain dehydrogenases/reductases (SDR) family.

The protein resides in the secreted. In terms of biological role, putative oxidoreductase. The chain is Dehydrogenase/reductase SDR family member 13 from Homo sapiens (Human).